We begin with the raw amino-acid sequence, 137 residues long: Large ribosomal subunit protein uL16 (137 aa).

Belongs to the universal ribosomal protein uL16 family. In terms of assembly, part of the 50S ribosomal subunit.

In terms of biological role, binds 23S rRNA and is also seen to make contacts with the A and possibly P site tRNAs. The polypeptide is Large ribosomal subunit protein uL16 (Pseudomonas fluorescens (strain Pf0-1)).